Reading from the N-terminus, the 499-residue chain is Putative hydrolase YuaR (499 aa).

The signal sequence occupies residues 1–26 (MRVIMKPLRRTLVFFIFSVFLCGTVS). Residues 94-393 (GSVIIISGGP…DAFPAVNFER (300 aa)) form the AB hydrolase-1 domain. The active-site Nucleophile is Ser207. Residue Asp433 is part of the active site. The active-site Proton donor is the His460.

This sequence belongs to the peptidase S33 family.

The protein is Putative hydrolase YuaR (yuaR) of Escherichia coli (strain K12).